Here is a 275-residue protein sequence, read N- to C-terminus: Fructoselysine 3-epimerase (275 aa).

The active-site Proton donor/acceptor is E148. A divalent metal cation is bound by residues E148, D181, H207, and E247. The Proton donor/acceptor role is filled by E247.

Belongs to the FrlC family. Homooctamer. Ni(2+) is required as a cofactor. Co(2+) serves as cofactor.

The enzyme catalyses N(6)-(D-psicosyl)-L-lysine = N(6)-(D-fructosyl)-L-lysine. Functionally, catalyzes the reversible interconversion of fructoselysine with its C-3 epimer, psicoselysine. Allows E.coli to utilize psicoselysine for growth. Does not act on psicose or fructoselysine 6-phosphate. The sequence is that of Fructoselysine 3-epimerase (frlC) from Escherichia coli O157:H7.